The following is a 566-amino-acid chain: MTTREYDYIICGAGSAGNVLATRLTEDPDVTVLLLEAGGPDYRFDFRTQMPAALAYPLQGRRYNWAYETDPEPHMDNRRMECGRGKGLGGSSLINGMCYIRGNALDYDNWSTHKGLENWTYLDCLPYFKKAETRDVGPNDYHGGNGPVSVTTSKPGVNPLFEAMVDAGVQAGYPRTDDLNGYQQEGFGPMDRTVTPKGRRASTARGYLDQAKVRPNLEIVTHALADRILFDGKRASGVTYLRGSERATAHARREVLVCSGAIASPQLLQRSGVGPGAWLKELDIPVVLDLPGVGQNLQDHLEMYIQYECKEPVSLYPALKWWNQPKIGLEWMLNGTGLGASNHFEAGGFIRTRDDDLWPNIQYHFLPVAINYNGSNAIEMHGFQAHVGSMRSPSRGRVKLRSRDPNDHPSILFNYMAEALDWREFRDAIRATREIMRQPALDRYRGRELNPGADCKSDKELDAFVRARAETAFHPSCSCKMGYDDMAVVDEEGRVHGLEGLRVVDASIMPIITTGNLNAPTIMIAEKIADKIRGRKALARVDVPYFVANGAMARNIAKAVRQPETV.

Residue 7–36 coordinates FAD; the sequence is DYIICGAGSAGNVLATRLTEDPDVTVLLLE. The segment at 180 to 202 is disordered; the sequence is NGYQQEGFGPMDRTVTPKGRRAS. Catalysis depends on His-474, which acts as the Proton acceptor.

The protein belongs to the GMC oxidoreductase family. Requires FAD as cofactor.

It catalyses the reaction choline + A = betaine aldehyde + AH2. The enzyme catalyses betaine aldehyde + NAD(+) + H2O = glycine betaine + NADH + 2 H(+). It participates in amine and polyamine biosynthesis; betaine biosynthesis via choline pathway; betaine aldehyde from choline (cytochrome c reductase route): step 1/1. Functionally, involved in the biosynthesis of the osmoprotectant glycine betaine. Catalyzes the oxidation of choline to betaine aldehyde and betaine aldehyde to glycine betaine at the same rate. This is Oxygen-dependent choline dehydrogenase from Burkholderia lata (strain ATCC 17760 / DSM 23089 / LMG 22485 / NCIMB 9086 / R18194 / 383).